Consider the following 425-residue polypeptide: MDRLEGPPRLILVADLDCTLVDHDDPENNDLLRFNALWEAHYRHDSLLVYCTGRSFSSYSSLRKKRPLLTPDIAVTSVGSEIVYGGGESTVSDVVWTARLDYKWNRDIVVEETLKFPKLEPQPDKSQEEHKVSFFVGREDAVEIMKVLPGILEERGVDVKLVYSNGYAFDVLPRGAGKQGALTYLLDKLDIEGKQPSNTLVCGDSGNDAELFNISDVYGVMVSNSHEELLQWYEENAKDNPKIFHASERCGAGMIEAIQRFNLGPNVSPRDVMDTENFHGESLNPAHEVVQFYLFYERWRCGEVEKSDKYLQNLKSLSSPLGIFVHPSGVEKPIHEWIDEMENLYGDGKEKKFRIWLDNVTSSHISSDTWLAKFVKHELSEGKVRSCSTKVLLSYKEEKQRLTWMHIHQSWLDESSSDDQEKWIF.

Belongs to the sucrose phosphatase family. In terms of assembly, homodimer. The cofactor is Mg(2+).

The enzyme catalyses sucrose 6(F)-phosphate + H2O = sucrose + phosphate. The protein operates within glycan biosynthesis; sucrose biosynthesis; sucrose from D-fructose 6-phosphate and UDP-alpha-D-glucose: step 2/2. Functionally, catalyzes the final step of sucrose synthesis. This chain is Probable sucrose-phosphatase 3a (SPP3A), found in Arabidopsis thaliana (Mouse-ear cress).